Here is a 683-residue protein sequence, read N- to C-terminus: Transforming growth factor-beta-induced protein ig-h3 (683 aa).

The signal sequence occupies residues 1–23 (MALFVRLLALALALALGPAATLA). Serine 37 carries the post-translational modification Phosphoserine. In terms of domain architecture, EMI spans 45–99 (GPNVCAVQKVIGTNRKYFTNCKQWYQRKICGKSTVISYECCPGYEKVPGERSCPA). Cystine bridges form between cysteine 49–cysteine 85, cysteine 74–cysteine 339, cysteine 84–cysteine 97, cysteine 214–cysteine 317, and cysteine 473–cysteine 478. Position 65 is an S-cysteinyl cysteine (cysteine 65). FAS1 domains are found at residues 103–236 (LANL…DKVI), 240–371 (TNNI…DELL), 375–498 (SAKT…DRML), and 502–632 (SGTV…TSVL). Positions 642-644 (RGD) match the Cell attachment site motif.

As to quaternary structure, binds to type I, II, and IV collagens. In terms of processing, gamma-carboxylation is controversial. Gamma-carboxyglutamated; gamma-carboxyglutamate residues are formed by vitamin K dependent carboxylation; this may be required for calcium binding. According to a more recent report, does not contain vitamin K-dependent gamma-carboxyglutamate residues. The EMI domain contains 2 expected intradomain disulfide bridges (Cys-49-Cys85 and Cys-84-Cys-97) and one unusual interdomain disulfide bridge to the second FAS1 domain (Cys-74-Cys-339). This arrangement violates the predicted disulfide bridge pattern of an EMI domain. Located primarily in the epithelium of normal adult cornea, in fetal stromal cells, and both endothelium- and stroma-derived cells in healing corneal wounds. Not expressed in normal adult endothelium and stroma.

It localises to the secreted. The protein resides in the extracellular space. Its subcellular location is the extracellular matrix. In terms of biological role, plays a role in cell adhesion. May play a role in cell-collagen interactions. This chain is Transforming growth factor-beta-induced protein ig-h3 (TGFBI), found in Oryctolagus cuniculus (Rabbit).